A 121-amino-acid polypeptide reads, in one-letter code: Large ribosomal subunit protein bL12 (121 aa).

Belongs to the bacterial ribosomal protein bL12 family. As to quaternary structure, homodimer. Part of the ribosomal stalk of the 50S ribosomal subunit. Forms a multimeric L10(L12)X complex, where L10 forms an elongated spine to which 2 to 4 L12 dimers bind in a sequential fashion. Binds GTP-bound translation factors.

Forms part of the ribosomal stalk which helps the ribosome interact with GTP-bound translation factors. Is thus essential for accurate translation. This is Large ribosomal subunit protein bL12 from Pseudomonas syringae pv. tomato (strain ATCC BAA-871 / DC3000).